Consider the following 237-residue polypeptide: Golgi to ER traffic protein 1 (237 aa).

Residues 1 to 4 are Lumenal-facing; it reads MDSG. The helical transmembrane segment at 5–24 threads the bilayer; sequence GWIVYCCIFFILLGKVLEYT. Residues 25-110 are Cytoplasmic-facing; it reads SSYQDKWFTK…SSKKVFGRVK (86 aa). The stretch at 40-99 forms a coiled coil; it reads EARKLNSQYHELLSERLRLQEENHSISAQDNYARWTKNNRKLGELDKKLGTIRDKLQETN. A helical membrane pass occupies residues 111-131; it reads LIGLTIPFWILKIWQRSHVVY. The Lumenal portion of the chain corresponds to 132–176; it reads HFPKQDLFPKLVTGVWARGWLYLALGPLQYLRNGSLNIQDYAPHG. A helical membrane pass occupies residues 177–193; the sequence is VSLGIWIWALQATINTL. Over 194 to 237 the chain is Cytoplasmic; sequence EFLVKQVILEKPVSPPPQKSKSATKAETKRPEKLEITDDKVELD. A disordered region spans residues 205–237; the sequence is PVSPPPQKSKSATKAETKRPEKLEITDDKVELD. Residues 217–237 show a composition bias toward basic and acidic residues; it reads TKAETKRPEKLEITDDKVELD.

It belongs to the WRB/GET1 family. As to quaternary structure, component of the Golgi to ER traffic (GET) complex, which is composed of GET1, GET2 and GET3. Within the complex, GET1 and GET2 form a heterotetramer which is stabilized by phosphatidylinositol binding and which binds to the GET3 homodimer.

It is found in the endoplasmic reticulum membrane. The protein resides in the golgi apparatus membrane. Functionally, required for the post-translational delivery of tail-anchored (TA) proteins to the endoplasmic reticulum. Together with GET2, acts as a membrane receptor for soluble GET3, which recognizes and selectively binds the transmembrane domain of TA proteins in the cytosol. The GET complex cooperates with the HDEL receptor ERD2 to mediate the ATP-dependent retrieval of resident ER proteins that contain a C-terminal H-D-E-L retention signal from the Golgi to the ER. The protein is Golgi to ER traffic protein 1 of Zygosaccharomyces rouxii (strain ATCC 2623 / CBS 732 / NBRC 1130 / NCYC 568 / NRRL Y-229).